The sequence spans 344 residues: Probable dual-specificity RNA methyltransferase RlmN (344 aa).

E89 serves as the catalytic Proton acceptor. The 235-residue stretch at 95–329 (TDQRLTVCVS…VSLRASRGLD (235 aa)) folds into the Radical SAM core domain. The cysteines at positions 102 and 334 are disulfide-linked. [4Fe-4S] cluster-binding residues include C109, C113, and C116. S-adenosyl-L-methionine is bound by residues 156-157 (GE), S186, 215-217 (SLH), and N291. The S-methylcysteine intermediate role is filled by C334.

It belongs to the radical SAM superfamily. RlmN family. [4Fe-4S] cluster is required as a cofactor.

It is found in the cytoplasm. It catalyses the reaction adenosine(2503) in 23S rRNA + 2 reduced [2Fe-2S]-[ferredoxin] + 2 S-adenosyl-L-methionine = 2-methyladenosine(2503) in 23S rRNA + 5'-deoxyadenosine + L-methionine + 2 oxidized [2Fe-2S]-[ferredoxin] + S-adenosyl-L-homocysteine. The catalysed reaction is adenosine(37) in tRNA + 2 reduced [2Fe-2S]-[ferredoxin] + 2 S-adenosyl-L-methionine = 2-methyladenosine(37) in tRNA + 5'-deoxyadenosine + L-methionine + 2 oxidized [2Fe-2S]-[ferredoxin] + S-adenosyl-L-homocysteine. Specifically methylates position 2 of adenine 2503 in 23S rRNA and position 2 of adenine 37 in tRNAs. The sequence is that of Probable dual-specificity RNA methyltransferase RlmN from Parasynechococcus marenigrum (strain WH8102).